The chain runs to 515 residues: ATP-dependent RNA helicase DBP3 (515 aa).

The tract at residues 1–67 is disordered; the sequence is MAKRPLQTEA…SDSRYLPTPE (67 aa). Positions 100–127 match the Q motif motif; sequence TSFSFLPESSNDLYLPLEKFSSPTPIQA. The region spanning 130–306 is the Helicase ATP-binding domain; sequence WPLAFAGRDL…ASFTKNPVTV (177 aa). ATP is bound at residue 143–150; it reads AETGSGKT. Positions 252-255 match the DEAD box motif; the sequence is DEAD. In terms of domain architecture, Helicase C-terminal spans 335-484; that stretch reads RLLELLRRYQ…DVPESLLKFG (150 aa).

It belongs to the DEAD box helicase family. DDX5/DBP2 subfamily.

It is found in the nucleus. The protein localises to the nucleolus. It carries out the reaction ATP + H2O = ADP + phosphate + H(+). Functionally, ATP-dependent RNA helicase required for 60S ribosomal subunit synthesis. Involved in efficient pre-rRNA processing, predominantly at site A3, which is necessary for the normal formation of 25S and 5.8S rRNAs. The sequence is that of ATP-dependent RNA helicase DBP3 (DBP3) from Coccidioides immitis (strain RS) (Valley fever fungus).